The following is a 192-amino-acid chain: Ciliary microtubule-associated protein 3 (192 aa).

As to quaternary structure, interacts with proteins involved in ciliary transport, including ARL13B, CETN1, KIF3A, RAB6A, RAB8A, TUBB1 and TUBG1. Interacts with AURKA.

The protein resides in the cytoplasmic vesicle. Its subcellular location is the golgi apparatus. It localises to the trans-Golgi network. It is found in the cytoplasm. Functionally, during primary cilia disassembly, involved in cilia disassembly. Required specifically to control cilia retraction as well as the liberation and duplication of the basal body/centrosome. May act by stimulating AURKA activity at the basal body in a cell cycle-dependent manner. The polypeptide is Ciliary microtubule-associated protein 3 (CIMAP3) (Bos taurus (Bovine)).